Consider the following 335-residue polypeptide: Phosphate acyltransferase (335 aa).

The protein belongs to the PlsX family. In terms of assembly, homodimer. Probably interacts with PlsY.

Its subcellular location is the cytoplasm. It carries out the reaction a fatty acyl-[ACP] + phosphate = an acyl phosphate + holo-[ACP]. Its pathway is lipid metabolism; phospholipid metabolism. In terms of biological role, catalyzes the reversible formation of acyl-phosphate (acyl-PO(4)) from acyl-[acyl-carrier-protein] (acyl-ACP). This enzyme utilizes acyl-ACP as fatty acyl donor, but not acyl-CoA. The protein is Phosphate acyltransferase of Clostridium botulinum (strain ATCC 19397 / Type A).